The following is a 137-amino-acid chain: Cellular retinoic acid-binding protein 1 (137 aa).

The short motif at 21-31 (RALGVNAMLRK) is the Nuclear localization signal element. An all-trans-retinoate-binding site is contributed by 132-134 (RIY).

This sequence belongs to the calycin superfamily. Fatty-acid binding protein (FABP) family.

It is found in the cytoplasm. Functionally, cytosolic CRABPs may regulate the access of retinoic acid to the nuclear retinoic acid receptors. The protein is Cellular retinoic acid-binding protein 1 (CRABP1) of Pelodiscus sinensis (Chinese softshell turtle).